Here is a 77-residue protein sequence, read N- to C-terminus: Translation initiation factor IF-1, chloroplastic (77 aa).

The S1-like domain occupies 1 to 71 (MKEQKWIHEG…SRGRIIYRLR (71 aa)).

The protein belongs to the IF-1 family. As to quaternary structure, component of the 30S ribosomal translation pre-initiation complex which assembles on the 30S ribosome in the order IF-2 and IF-3, IF-1 and N-formylmethionyl-tRNA(fMet); mRNA recruitment can occur at any time during PIC assembly.

It is found in the plastid. The protein localises to the chloroplast. Functionally, one of the essential components for the initiation of protein synthesis. Stabilizes the binding of IF-2 and IF-3 on the 30S subunit to which N-formylmethionyl-tRNA(fMet) subsequently binds. Helps modulate mRNA selection, yielding the 30S pre-initiation complex (PIC). Upon addition of the 50S ribosomal subunit IF-1, IF-2 and IF-3 are released leaving the mature 70S translation initiation complex. The protein is Translation initiation factor IF-1, chloroplastic of Buxus microphylla (Littleleaf boxwood).